We begin with the raw amino-acid sequence, 461 residues long: Photosystem II CP43 reaction center protein (461 aa).

Residues 1-2 (ME) constitute a propeptide that is removed on maturation. Thr-3 is modified (N-acetylthreonine). The residue at position 3 (Thr-3) is a Phosphothreonine. A run of 5 helical transmembrane segments spans residues 57–81 (LFEVAHFIPEKPMYEQGLILLPHLA), 122–143 (IIGPEVLEESFPFFGYDWKDKN), 166–188 (KAMFFGGVYDTWAPGGGDVRVIS), 243–263 (KPFSWARRALVWSGEAYLSYS), and 279–300 (WFNNTAYPSEFFGPTGPEASQA). A [CaMn4O5] cluster-binding site is contributed by Glu-355. A helical membrane pass occupies residues 435–459 (RARAASGGFEKGLDRENEPVLSMKL).

The protein belongs to the PsbB/PsbC family. PsbC subfamily. In terms of assembly, PSII is composed of 1 copy each of membrane proteins PsbA, PsbB, PsbC, PsbD, PsbE, PsbF, PsbH, PsbI, PsbJ, PsbK, PsbL, PsbM, PsbT, PsbX, PsbY, PsbZ, Psb30/Ycf12, at least 3 peripheral proteins of the oxygen-evolving complex and a large number of cofactors. It forms dimeric complexes. Binds multiple chlorophylls and provides some of the ligands for the Ca-4Mn-5O cluster of the oxygen-evolving complex. It may also provide a ligand for a Cl- that is required for oxygen evolution. PSII binds additional chlorophylls, carotenoids and specific lipids. is required as a cofactor.

It localises to the plastid. It is found in the cyanelle thylakoid membrane. Its function is as follows. One of the components of the core complex of photosystem II (PSII). It binds chlorophyll and helps catalyze the primary light-induced photochemical processes of PSII. PSII is a light-driven water:plastoquinone oxidoreductase, using light energy to abstract electrons from H(2)O, generating O(2) and a proton gradient subsequently used for ATP formation. The protein is Photosystem II CP43 reaction center protein of Cyanophora paradoxa.